The following is a 267-amino-acid chain: 4-hydroxy-tetrahydrodipicolinate reductase (267 aa).

Position 10-15 (10-15) interacts with NAD(+); it reads GCLGKQ. NADP(+) is bound at residue Arg37. Residues 99 to 101 and 122 to 125 contribute to the NAD(+) site; these read GTT and TTNV. His154 (proton donor/acceptor) is an active-site residue. Position 155 (His155) interacts with (S)-2,3,4,5-tetrahydrodipicolinate. Lys158 acts as the Proton donor in catalysis. 164-165 is a binding site for (S)-2,3,4,5-tetrahydrodipicolinate; the sequence is GT.

The protein belongs to the DapB family.

The protein resides in the cytoplasm. It carries out the reaction (S)-2,3,4,5-tetrahydrodipicolinate + NAD(+) + H2O = (2S,4S)-4-hydroxy-2,3,4,5-tetrahydrodipicolinate + NADH + H(+). The catalysed reaction is (S)-2,3,4,5-tetrahydrodipicolinate + NADP(+) + H2O = (2S,4S)-4-hydroxy-2,3,4,5-tetrahydrodipicolinate + NADPH + H(+). It functions in the pathway amino-acid biosynthesis; L-lysine biosynthesis via DAP pathway; (S)-tetrahydrodipicolinate from L-aspartate: step 4/4. Catalyzes the conversion of 4-hydroxy-tetrahydrodipicolinate (HTPA) to tetrahydrodipicolinate. The chain is 4-hydroxy-tetrahydrodipicolinate reductase from Ehrlichia chaffeensis (strain ATCC CRL-10679 / Arkansas).